The chain runs to 231 residues: CD302 antigen (231 aa).

The signal sequence occupies residues 1 to 21; sequence MSAAVVATLPTLLLLLGLAAA. Over 22–169 the chain is Extracellular; the sequence is DCPSSSWVQF…YEKKYLPDHH (148 aa). A C-type lectin domain is found at 31–153; it reads FQSNCYIFLQ…CEVSSVEGAL (123 aa). Asparagine 110 carries an N-linked (GlcNAc...) asparagine glycan. Cysteines 129 and 144 form a disulfide. A helical membrane pass occupies residues 170-190; sequence ILITALVIASTTILTITGAVV. The Cytoplasmic segment spans residues 191 to 231; that stretch reads WFLYKRNLTSGLTNTAYTTAPQLPYNDDCILVDAEENEYVA.

It is found in the membrane. Its subcellular location is the cell projection. It localises to the filopodium. The protein localises to the cytoplasm. The protein resides in the cell cortex. It is found in the microvillus. Its function is as follows. Potential multifunctional C-type lectin receptor that may play roles in endocytosis and phagocytosis as well as in cell adhesion and migration. The polypeptide is CD302 antigen (Trichosurus vulpecula (Brush-tailed possum)).